Reading from the N-terminus, the 205-residue chain is Quinone-oxidoreductase QR2 (205 aa).

The region spanning 5–192 (VYIVYYSTYG…LKQAFHQGMY (188 aa)) is the Flavodoxin-like domain. FMN is bound by residues 11–15 (STYGH), 112–165 (IFFS…SPYG), and H136. Y13 is a binding site for NAD(+).

This sequence belongs to the WrbA family. It depends on FMN as a cofactor.

It catalyses the reaction a quinone + NADH + H(+) = a quinol + NAD(+). The catalysed reaction is a quinone + NADPH + H(+) = a quinol + NADP(+). Inhibited by dicumarol. NAD(P)H:quinone oxidoreductase reducing quinones by a two-electron transfer mechanism. Can use either NADPH or NADH as electron donor. Can use menadione, 5-hydroxy-1,4-naphthoquinone (juglone) and 2,6-dimethoxy-p-benzoquinone (DMBQ) as substrates. Mitigates the toxicity of exogenous quinones in the rhizosphere. The chain is Quinone-oxidoreductase QR2 from Triphysaria versicolor (Yellow owl's clover).